The chain runs to 365 residues: Potassium channel subfamily K member 9 (365 aa).

Residues 1-8 (MKKQNVRT) are Cytoplasmic-facing. A helical membrane pass occupies residues 9–29 (LSLIACTFTYLLVGAAVFDAL). At 30–88 (ESDHEMREEEKLKAEEIRIRGKYNISTEDYRQLELVILQSEPHRAGVQWKFAGSFYFAI) the chain is on the extracellular side. N53 is a glycosylation site (N-linked (GlcNAc...) asparagine). Positions 89–101 (TVITTIGYGHAAP) form an intramembrane region, pore-forming. K(+) is bound by residues T93, I94, G95, and Y96. Residues 93 to 98 (TIGYGH) are selectivity filter 1. At 102–107 (GTDAGK) the chain is on the extracellular side. A helical membrane pass occupies residues 108–128 (AFCMFYAVLGIPLTLVMFQSL). Topologically, residues 129–158 (GERMNTFVRYLLKRIKKCCGMRNTEVSMEN) are cytoplasmic. A helical membrane pass occupies residues 159-179 (MVTVGFFSCMGTLCIGAAAFS). The Extracellular portion of the chain corresponds to 180–194 (QCEEWSFFHAYYYCF). Positions 195–207 (ITLTTIGFGDYVA) form an intramembrane region, pore-forming. Residues T199, I200, G201, and F202 each contribute to the K(+) site. The segment at 199–204 (TIGFGD) is selectivity filter 2. The Extracellular segment spans residues 208–218 (LQSKGALQRKP). Residues 219–239 (FYVAFSFMYILVGLTVIGAFL) traverse the membrane as a helical segment. Over 240-365 (NLVVLRFLTM…HRLMLRRKSV (126 aa)) the chain is Cytoplasmic. The interval 243-248 (VLRFLT) is X-gate.

This sequence belongs to the two pore domain potassium channel (TC 1.A.1.8) family. Homodimer. Heterodimer with KCNK1. Heterodimer with KCNK3. In terms of tissue distribution, highly expressed in the brain.

It localises to the cell membrane. The protein localises to the mitochondrion inner membrane. The protein resides in the cell projection. Its subcellular location is the dendrite. The catalysed reaction is K(+)(in) = K(+)(out). It catalyses the reaction Na(+)(in) = Na(+)(out). Inhibited by extracellular acidification. Functionally, k(+) channel that conducts voltage-dependent outward rectifying currents upon membrane depolarization. Voltage sensing is coupled to K(+) electrochemical gradient in an 'ion flux gating' mode where outward but not inward ion flow opens the gate. Changes ion selectivity and becomes permeable to Na(+) ions in response to extracellular acidification. Protonation of the pH sensor His-98 stabilizes C-type inactivation conformation likely converting the channel from outward K(+)-conducting, to inward Na(+)-conducting to nonconductive state. Homo- and heterodimerizes to form functional channels with distinct regulatory and gating properties. Allows K(+) currents with fast-gating kinetics important for the repolarization and hyperpolarization phases of action potentials. In granule neurons, hyperpolarizes the resting membrane potential to limit intrinsic neuronal excitability, but once the action potential threshold is reached, supports high-frequency action potential firing and increased neuronal excitability. Homomeric and/or heteromeric KCNK3:KCNK9 channels operate in cerebellar granule cells, whereas heteromeric KCNK1:KCNK9 enables currents in hippocampal dentate gyrus granule neurons. Dispensable for central chemosensory respiration i.e. breathing controlled by brainstem CO2/pH, it rather conducts pH-sensitive currents and controls the firing rate of serotonergic raphe neurons involved in potentiation of the respiratory chemoreflex. In retinal ganglion cells, mediates outward rectifying currents that regulate action potentials in response to acidification of the synaptic cleft. Involved in transmission of image-forming and nonimage-forming visual information in the retina. In adrenal gland, contributes to the maintenance of a hyperpolarized resting membrane potential of aldosterone-producing cells at zona glomerulosa and limits aldosterone release as part of a regulatory mechanism that controls arterial blood pressure and electrolyte homeostasis. The polypeptide is Potassium channel subfamily K member 9 (KCNK9) (Cavia porcellus (Guinea pig)).